We begin with the raw amino-acid sequence, 256 residues long: MGRGRVQLKRIENKINRQVTFSKRRAGLLKKAQEISVLCDAEVSLIVFSHKGKLFEYTSESCMEKVLERYERYSYAERQLIAPDSHINAQPNWSMEYSRLKAKIELLERNQRHYLGEDLEPMSLKDLQNLEQQLETALKHIRSRKNQLMYESLNHLQRKENEIQEENSMLTKQIKERENILRTQQTQCEQLNRNHDVPPPQPQPFQHPHPYMISHQTSPFLNLGGMYQGEDQTAMRRNNLDLTLEPIYNYLGCYAA.

Residues M1–S61 form the MADS-box domain. The 91-residue stretch at Q90–I180 folds into the K-box domain.

In terms of assembly, homodimer capable of binding to CArG-box sequences.

Its subcellular location is the nucleus. Probable transcription factor that promotes early floral meristem identity in synergy with APETALA1, FRUITFULL and LEAFY. Is required subsequently for the transition of an inflorescence meristem into a floral meristem. Seems to be partially redundant to the function of APETALA1. In Arabidopsis lyrata subsp. lyrata (Lyre-leaved rock-cress), this protein is Transcription factor CAULIFLOWER (CAL).